Here is a 697-residue protein sequence, read N- to C-terminus: Histone-lysine N-methyltransferase SETDB2 (697 aa).

In terms of domain architecture, MBD spans 172-242 (LKKENPLNLP…DNFSFSTQVQ (71 aa)). Positions 304 to 378 (KCCSCTDGCL…LCQNRVVQHG (75 aa)) constitute a Pre-SET domain. Residues Cys-306, Cys-308, Cys-312, Cys-318, Cys-320, Cys-359, Cys-363, Cys-365, and Cys-370 each contribute to the Zn(2+) site. The SET domain occupies 381 to 672 (LRLQVFKTDT…AGTELTWDYN (292 aa)). Residue 391-393 (KGW) coordinates S-adenosyl-L-methionine. Disordered stretches follow at residues 438–461 (KEDNGSTSTLMLSKRKRKPSHSDS) and 529–605 (VHNS…STSP). Residues 565 to 581 (SGYVSEESSSSVISGGH) show a composition bias toward low complexity. S-adenosyl-L-methionine-binding positions include Arg-626 and 629–630 (NH). Zn(2+) is bound by residues Cys-632, Cys-685, Cys-687, and Cys-692.

It belongs to the class V-like SAM-binding methyltransferase superfamily.

The protein resides in the nucleus. It localises to the chromosome. The enzyme catalyses N(6),N(6)-dimethyl-L-lysyl(9)-[histone H3] + S-adenosyl-L-methionine = N(6),N(6),N(6)-trimethyl-L-lysyl(9)-[histone H3] + S-adenosyl-L-homocysteine + H(+). In terms of biological role, histone methyltransferase involved in left-right axis specification in early development and mitosis. Specifically trimethylates 'Lys-9' of histone H3 (H3K9me3). H3K9me3 represents a specific tag for epigenetic transcriptional repression by recruiting HP1 (CBX1, CBX3 and/or CBX5) proteins to methylated histones. Contributes to H3K9me3 in both the interspersed repetitive elements and centromere-associated repeats. Plays a role in chromosome condensation and segregation during mitosis. This chain is Histone-lysine N-methyltransferase SETDB2 (setdb2), found in Xenopus tropicalis (Western clawed frog).